Here is a 483-residue protein sequence, read N- to C-terminus: Endoplasmic reticulum lectin 1 (483 aa).

An N-terminal signal peptide occupies residues 1-33 (MEEGDGGLRSLVPGGPLLLVLYGLLEASGGGRA). 2 MRH domains span residues 111–246 (SSCS…LCSH) and 342–469 (SYCF…ICKI). Cys-113 and Cys-126 are joined by a disulfide. N-linked (GlcNAc...) asparagine glycosylation is present at Asn-195. 5 cysteine pairs are disulfide-bonded: Cys-199-Cys-232, Cys-215-Cys-244, Cys-344-Cys-357, Cys-421-Cys-455, and Cys-436-Cys-467.

As to quaternary structure, may form a complex with OS9, HSPA5, SYVN1, and SEL1L with which it interacts directly. Interacts (via PRKCSH 2 domain) with KREMEN2 (when glycosylated). Interacts with HSPA5. Post-translationally, N-glycosylated.

The protein resides in the endoplasmic reticulum lumen. Probable lectin that binds selectively to improperly folded lumenal proteins. May function in endoplasmic reticulum quality control and endoplasmic reticulum-associated degradation (ERAD) of both non-glycosylated proteins and glycoproteins. The polypeptide is Endoplasmic reticulum lectin 1 (Erlec1) (Mus musculus (Mouse)).